The chain runs to 208 residues: Methyl-CpG-binding domain protein 3-like 3 (208 aa).

The protein belongs to the MBD3L family.

In Homo sapiens (Human), this protein is Methyl-CpG-binding domain protein 3-like 3 (MBD3L3).